The chain runs to 510 residues: Gallate 1-beta-glucosyltransferase (510 aa).

His-19 acts as the Proton acceptor in catalysis. Position 19 (His-19) interacts with an anthocyanidin. 6 residues coordinate UDP-alpha-D-glucose: Gln-343, His-358, Trp-361, Asn-362, Ser-363, and Glu-366. Residue Gly-381 participates in an anthocyanidin binding. Residues Asp-382 and Gln-383 each contribute to the UDP-alpha-D-glucose site.

Belongs to the UDP-glycosyltransferase family. As to expression, expressed in swelling buds and young leaves.

It catalyses the reaction 3,4,5-trihydroxybenzoate + UDP-alpha-D-glucose = 1-O-galloyl-beta-D-glucose + UDP. It carries out the reaction vanillate + UDP-alpha-D-glucose = 1-O-(4-hydroxy-3-methoxybenzoyl)-beta-D-glucose + UDP. The catalysed reaction is 3,4-dihydroxybenzoate + UDP-alpha-D-glucose = 1-O-(3,4-dihydroxy-benzoyl)-beta-D-glucose + UDP. Glucosyltransferase that catalyzes the formation of 1-O-beta-D-glucose esters with hydroxybenzoic acids as preferred glucosyl acceptors. Has the highest activity with 3,4-dihydroxybenzoate, vanillate and gallate in vitro. Gallate is the predicted native substrate of the enzyme, which thus catalyzes the formation of 1-O-galloyl-beta-D-glucose, the first committed step of gallotannin biosynthesis. This chain is Gallate 1-beta-glucosyltransferase, found in Quercus robur (English oak).